The following is a 232-amino-acid chain: Probable proteasome subunit alpha type-5 (232 aa).

It belongs to the peptidase T1A family. In terms of assembly, the 26S proteasome consists of a 20S proteasome core and two 19S regulatory subunits. The 20S proteasome core is composed of 28 subunits that are arranged in four stacked rings, resulting in a barrel-shaped structure. The two end rings are each formed by seven alpha subunits, and the two central rings are each formed by seven beta subunits. The catalytic chamber with the active sites is on the inside of the barrel.

It localises to the cytoplasm. The protein localises to the nucleus. The proteasome degrades poly-ubiquitinated proteins in the cytoplasm and in the nucleus. It is essential for the regulated turnover of proteins and for the removal of misfolded proteins. The proteasome is a multicatalytic proteinase complex that is characterized by its ability to cleave peptides with Arg, Phe, Tyr, Leu, and Glu adjacent to the leaving group at neutral or slightly basic pH. It has an ATP-dependent proteolytic activity. The polypeptide is Probable proteasome subunit alpha type-5 (PUP2) (Encephalitozoon cuniculi (strain GB-M1) (Microsporidian parasite)).